The sequence spans 295 residues: Small ribosomal subunit protein uS2 (295 aa).

An N-acetylserine modification is found at S2. Phosphoserine is present on S43. K52 carries the post-translational modification N6-acetyllysine. The tract at residues 54–113 is interaction with PPP1R16B; the sequence is TWEKLLLAARAIVAIENPADVSVISSRNTGQRAVLKFAAATGATPIAGRFTPGTFTNQIQ. At K89 the chain carries N6-acetyllysine; alternate. A Glycyl lysine isopeptide (Lys-Gly) (interchain with G-Cter in SUMO2); alternate cross-link involves residue K89. T97 is subject to Phosphothreonine. Laminin-binding stretches follow at residues 161–180 and 205–229; these read IPCN…MLAR and RDPE…EFQG. Positions 214–227 are enriched in basic and acidic residues; it reads EQAAAEKAVTKEEF. The segment at 214–240 is disordered; the sequence is EQAAAEKAVTKEEFQGEWTAPAPEFTA. [DE]-W-[ST] repeat units lie at residues 230–232, 247–249, 266–268, and 275–277; these read EWT and DWS. The segment at 242–295 is laminin-binding; sequence QPEVADWSEGVQVPSVPIQQFPTEDWSARPFTEDWSAAPTAQATEWVGTTSELS. Residues 263–295 are disordered; that stretch reads PTEDWSARPFTEDWSAAPTAQATEWVGTTSELS. The span at 280–295 shows a compositional bias: polar residues; it reads PTAQATEWVGTTSELS.

It belongs to the universal ribosomal protein uS2 family. Monomer (37LRP) and homodimer (67LR). Component of the small ribosomal subunit. Mature ribosomes consist of a small (40S) and a large (60S) subunit. The 40S subunit contains about 33 different proteins and 1 molecule of RNA (18S). The 60S subunit contains about 49 different proteins and 3 molecules of RNA (28S, 5.8S and 5S). Interacts with RPS21. Interacts with several laminins including at least LAMB1. Interacts with MDK. The mature dimeric form interacts with PPP1R16B (via its fourth ankyrin repeat). Interacts with PPP1CA only in the presence of PPP1R16B. Acylated. Acylation may be a prerequisite for conversion of the monomeric 37 kDa laminin receptor precursor (37LRP) to the mature dimeric 67 kDa laminin receptor (67LR), and may provide a mechanism for membrane association. Post-translationally, cleaved by stromelysin-3 (ST3) at the cell surface. Cleavage by stromelysin-3 may be a mechanism to alter cell-extracellular matrix interactions.

It is found in the cell membrane. The protein localises to the cytoplasm. It localises to the nucleus. Required for the assembly and/or stability of the 40S ribosomal subunit. Required for the processing of the 20S rRNA-precursor to mature 18S rRNA in a late step of the maturation of 40S ribosomal subunits. Also functions as a cell surface receptor for laminin. Plays a role in cell adhesion to the basement membrane and in the consequent activation of signaling transduction pathways. May play a role in cell fate determination and tissue morphogenesis. Also acts as a receptor for several other ligands, including the pathogenic prion protein, viruses, and bacteria. Acts as a PPP1R16B-dependent substrate of PPP1CA. The chain is Small ribosomal subunit protein uS2 from Ovis aries (Sheep).